The primary structure comprises 160 residues: Transcription antitermination protein NusB (160 aa).

Belongs to the NusB family.

Involved in transcription antitermination. Required for transcription of ribosomal RNA (rRNA) genes. Binds specifically to the boxA antiterminator sequence of the ribosomal RNA (rrn) operons. The sequence is that of Transcription antitermination protein NusB from Nitrobacter hamburgensis (strain DSM 10229 / NCIMB 13809 / X14).